We begin with the raw amino-acid sequence, 597 residues long: Glypican-3 (597 aa).

The first 24 residues, 1–24, serve as a signal peptide directing secretion; the sequence is MAGTVRTACLLVAMLLGLGCLGQA. Gln-25 is modified (pyrrolidone carboxylic acid). 7 disulfides stabilise this stretch: Cys-34–Cys-71, Cys-64–Cys-261, Cys-72–Cys-264, Cys-196–Cys-348, Cys-251–Cys-284, Cys-273–Cys-421, and Cys-277–Cys-409. Asn-123 and Asn-240 each carry an N-linked (GlcNAc...) asparagine glycan. Residue Ser-351 is modified to Phosphoserine. Residue Asn-417 is glycosylated (N-linked (GlcNAc...) asparagine). Residues Ser-494 and Ser-508 are each glycosylated (O-linked (Xyl...) (glycosaminoglycan) serine). The tract at residues 533-553 is disordered; that stretch reads DAPGNKQHGNQKDNEITTSHS.

This sequence belongs to the glypican family. In terms of assembly, heterodimer; disulfide-linked. Cleavage by a furin-like convertase results in production of alpha and beta chains which form a disulfide-linked heterodimer. Interacts with DPP4. Interacts with FGF2. Interacts with WNT5A. Also interacts with WNT3A and WNT7B. Interacts with hedgehog protein SHH; the heparan sulfate chains are not required for the interaction. Also interacts with hedgehog protein IHH. Interacts with CD81. Interacts with Wnt receptors FZD4, FZD7 and FZD8; the heparan sulfate chains are required for the interaction. In terms of processing, O-glycosylated; contains heparan sulfate and/or chondroitin sulfate. Cleaved intracellularly by a furin-like convertase to generate 2 subunits, alpha and beta, which remain associated through disulfide bonds and are associated with the cell surface via the GPI-anchor. This processing is essential for its role in inhibition of hedgehog signaling. A second proteolytic event may result in cleavage of the protein on the cell surface, separating it from the GPI-anchor and leading to its shedding from the cell surface.

The protein localises to the cell membrane. In terms of biological role, cell surface proteoglycan. Negatively regulates the hedgehog signaling pathway when attached via the GPI-anchor to the cell surface by competing with the hedgehog receptor PTC1 for binding to hedgehog proteins. Binding to the hedgehog protein SHH triggers internalization of the complex by endocytosis and its subsequent lysosomal degradation. Positively regulates the canonical Wnt signaling pathway by binding to the Wnt receptor Frizzled and stimulating the binding of the Frizzled receptor to Wnt ligands. Positively regulates the non-canonical Wnt signaling pathway. Binds to CD81 which decreases the availability of free CD81 for binding to the transcriptional repressor HHEX, resulting in nuclear translocation of HHEX and transcriptional repression. Inhibits the dipeptidyl peptidase activity of DPP4. Plays a role in limb patterning and skeletal development by controlling the cellular response to BMP4. Modulates the effects of growth factors BMP2, BMP7 and FGF7 on renal branching morphogenesis. Required for coronary vascular development. Plays a role in regulating cell movements during gastrulation. This Rattus norvegicus (Rat) protein is Glypican-3 (Gpc3).